We begin with the raw amino-acid sequence, 112 residues long: C-X-C motif chemokine 6 (112 aa).

The first 36 residues, 1 to 36, serve as a signal peptide directing secretion; it reads MRLLSSRAARVSGPSGSLCALLALLLLTPPGPLASA. Cystine bridges form between Cys48-Cys74 and Cys50-Cys90.

This sequence belongs to the intercrine alpha (chemokine CxC) family.

It is found in the secreted. Its function is as follows. Chemotactic for neutrophil granulocytes. Signals through binding and activation of its receptors (CXCR1 and CXCR2). In addition to its chemotactic and angiogenic properties, it has strong antibacterial activity against Gram-positive and Gram-negative bacteria (90-fold-higher when compared to CXCL5 and CXCL7). In Bos taurus (Bovine), this protein is C-X-C motif chemokine 6 (CXCL6).